Here is a 788-residue protein sequence, read N- to C-terminus: Ribonucleoside-diphosphate reductase large subunit (788 aa).

In terms of domain architecture, ATP-cone spans 7-98 (TYVVKRDGRK…VSNLHKKTNK (92 aa)). ATP contacts are provided by residues 11 to 12 (KR), 17 to 23 (EDVHFDK), threonine 59, and aspartate 63. Residues serine 208 and serine 223 each contribute to the GDP site. The cysteines at positions 224 and 450 are disulfide-linked. Residues 232 to 234 (DSI), lysine 249, arginine 262, and 269 to 270 (AG) each bind dTTP. A GDP-binding site is contributed by asparagine 433. The active-site Proton acceptor is the asparagine 433. The active-site Cysteine radical intermediate is the cysteine 435. Residues glutamate 437 and 610–613 (TAST) each bind GDP. Catalysis depends on glutamate 437, which acts as the Proton acceptor.

This sequence belongs to the ribonucleoside diphosphate reductase large chain family. Heterodimer of a large and a small subunit.

It carries out the reaction a 2'-deoxyribonucleoside 5'-diphosphate + [thioredoxin]-disulfide + H2O = a ribonucleoside 5'-diphosphate + [thioredoxin]-dithiol. Its activity is regulated as follows. Under complex allosteric control mediated by deoxynucleoside triphosphates and ATP binding to separate specificity and activation sites on the large subunit. The type of nucleotide bound at the specificity site determines substrate preference. It seems probable that ATP makes the enzyme reduce CDP and UDP, dGTP favors ADP reduction and dTTP favors GDP reduction. Stimulated by ATP and inhibited by dATP binding to the activity site. In terms of biological role, provides the precursors necessary for DNA synthesis. Catalyzes the biosynthesis of deoxyribonucleotides from the corresponding ribonucleotides. This is Ribonucleoside-diphosphate reductase large subunit (rnr-1) from Caenorhabditis elegans.